Here is a 217-residue protein sequence, read N- to C-terminus: Nucleoside diphosphate-linked moiety X motif 6 (217 aa).

One can recognise a Nudix hydrolase domain in the interval 42–177 (THQVGVAGAV…VAKLLLYGYN (136 aa)). Positions 77-98 (GLSDQGEDIGATAVREVLEETG) match the Nudix box motif.

This sequence belongs to the Nudix hydrolase family. Detected in liver (at protein level).

Its subcellular location is the cytoplasm. The protein localises to the nucleus. It is found in the mitochondrion. Functionally, may contribute to the regulation of cell proliferation. The polypeptide is Nucleoside diphosphate-linked moiety X motif 6 (nudt6) (Xenopus laevis (African clawed frog)).